A 414-amino-acid chain; its full sequence is MKLHCEVEVISRHLPALGLRNRGKGVRAVLSLCQQTSRSQPPVRAFLLISTLKDKRGTRYELRENIEQFFTKFVDEGKATVRLKEPPVDICLSKAISSSLKGFLSAMRLAHRGCNVDTPVSTLTPVKTSEFENFKTKMVITSKKDYPLSKNFPYSLEHLQTSYCGLVRVDMRMLCLKSLRKLDLSHNHIKKLPATIGDLIHLQELNLNDNHLESFSVALCHSTLQKSLRSLDLSKNKIKALPVQFCQLQELKNLKLDDNELIQFPCKIGQLINLRFLSAARNKLPFLPSEFRNLSLEYLDLFGNTFEQPKVLPVIKLQAPLTLLESSARTILHNRIPYGSHIIPFHLCQDLDTAKICVCGRFCLNSFIQGTTTMNLHSVAHTVVLVDNLGGTEAPIISYFCSLGCYVNSSDMLK.

LRR repeat units lie at residues 155–176 (SLEH…MLCL), 178–199 (SLRK…IGDL), 201–222 (HLQE…LCHS), 227–248 (SLRS…FCQL), 250–271 (ELKN…IGQL), 273–294 (NLRF…FRNL), and 295–316 (SLEY…PVIK).

Component of the probable ECS(LRR1) E3 ubiquitin-protein ligase complex which contains CUL2, RBX1, Elongin BC complex and LRR1. Interacts with CUL2, RBX1, ELOB and ELOC. In terms of tissue distribution, ubiquitous. Maximal expression was seen in the heart and skeletal muscle and minimal expression seen in the kidney.

It is found in the nucleus. It functions in the pathway protein modification; protein ubiquitination. Its function is as follows. Substrate recognition subunit of an ECS (Elongin BC-CUL2/5-SOCS-box protein) E3 ubiquitin-protein ligase complex which mediates the ubiquitination and subsequent proteasomal degradation of target proteins. ECS(LRR1) ubiquitinates MCM7 and promotes CMG replisome disassembly by VCP and chromatin extraction during S-phase. May negatively regulate the 4-1BB-mediated signaling cascades which result in the activation of NK-kappaB and JNK1. The sequence is that of Leucine-rich repeat protein 1 from Homo sapiens (Human).